A 269-amino-acid chain; its full sequence is Intercellular adhesion molecule 4 (269 aa).

The N-terminal stretch at 1–20 is a signal peptide; the sequence is SLFPLSLLFFLAAAYPGVGS. Residues 21–238 are Extracellular-facing; it reads ALGRRTKRAQ…MLAWSSAPTA (218 aa). 2 consecutive Ig-like C2-type domains span residues 60-122 and 144-215; these read GKSV…TRWA and GRKY…LNLD. 4 N-linked (GlcNAc...) asparagine glycosylation sites follow: N66, N76, N188, and N221. 4 disulfides stabilise this stretch: C67–C111, C67–C115, C71–C115, and C151–C208. Residues 239–259 traverse the membrane as a helical segment; the sequence is LASVSIAALVGILLTVGAAYL. Over 260 to 269 the chain is Cytoplasmic; that stretch reads CKCLAMKSQA.

Belongs to the immunoglobulin superfamily. ICAM family. N- and O-glycosylated.

The protein localises to the cell membrane. Its function is as follows. ICAM proteins are ligands for the leukocyte adhesion protein LFA-1 (integrin alpha-L/beta-2). ICAM4 is also a ligand for alpha-4/beta-1 and alpha-V integrins. This chain is Intercellular adhesion molecule 4 (ICAM4), found in Pan troglodytes (Chimpanzee).